A 235-amino-acid polypeptide reads, in one-letter code: Small ribosomal subunit protein uS2 (235 aa).

This sequence belongs to the universal ribosomal protein uS2 family.

The protein is Small ribosomal subunit protein uS2 (rpsB) of Geobacillus stearothermophilus (Bacillus stearothermophilus).